A 134-amino-acid polypeptide reads, in one-letter code: Interleukin-5 (134 aa).

A signal peptide spans 1-19 (MRMLLHLSLLALGASYMYA). T22 carries O-linked (GalNAc...) threonine glycosylation. N47 and N90 each carry an N-linked (GlcNAc...) asparagine glycan.

It belongs to the IL-5 family. Homodimer; disulfide-linked. Interacts with IL5RA. Interacts with CSF2RB.

It is found in the secreted. Its function is as follows. Homodimeric cytokine expressed predominantly by T-lymphocytes and NK cells that plays an important role in the survival, differentiation, and chemotaxis of eosinophils. Also acts on activated and resting B-cells to induce immunoglobulin production, growth, and differentiation. Mechanistically, exerts its biological effects through a receptor composed of IL5RA subunit and the cytokine receptor common subunit beta/CSF2RB. Binding to the receptor leads to activation of various kinases including LYN, SYK and JAK2 and thereby propagates signals through the RAS-MAPK and JAK-STAT5 pathways respectively. This is Interleukin-5 (IL5) from Cercocebus atys (Sooty mangabey).